Reading from the N-terminus, the 529-residue chain is UPF0159 protein TC_0921 (529 aa).

ThyX domains follow at residues 38–274 and 309–511; these read KGAL…AEPH and KGVK…LKFV.

Belongs to the UPF0159 family.

The sequence is that of UPF0159 protein TC_0921 from Chlamydia muridarum (strain MoPn / Nigg).